Consider the following 680-residue polypeptide: Zinc finger protein 263 (680 aa).

Lys-19 is covalently cross-linked (Glycyl lysine isopeptide (Lys-Gly) (interchain with G-Cter in SUMO2)). One can recognise an SCAN box domain in the interval His-43–Leu-125. A disordered region spans residues Leu-147–Arg-191. Lys-159 is covalently cross-linked (Glycyl lysine isopeptide (Lys-Gly) (interchain with G-Cter in SUMO2)). Phosphoserine occurs at positions 168 and 180. Residues Lys-286, Lys-300, and Lys-376 each participate in a glycyl lysine isopeptide (Lys-Gly) (interchain with G-Cter in SUMO2) cross-link. 5 C2H2-type zinc fingers span residues His-378–His-400, His-434–His-456, Phe-462–His-484, Tyr-490–His-512, and Tyr-518–His-540. Glycyl lysine isopeptide (Lys-Gly) (interchain with G-Cter in SUMO2) cross-links involve residues Lys-570 and Lys-579. 4 consecutive C2H2-type zinc fingers follow at residues Phe-572–His-594, Tyr-600–His-622, Tyr-628–His-650, and Tyr-656–His-678.

Belongs to the krueppel C2H2-type zinc-finger protein family. In terms of assembly, interacts with a number of proteins involved in chromatin modification and transcriptional corepression including DNMT1, DNMT3A, HDAC2, PHF8, TRIM28/KAP1, SETDB1, EZH2, UHRF1, CBX3/HP1-gamma, and CBX5/HP1-alpha; recruits these proteins to the SIX3 promoter region, leading to SIX3 transcriptional repression. Interacts with MAPK3/ERK1 and MAPK1/ERK2. Ubiquitinated, leading to proteasomal degradation. In terms of tissue distribution, expressed in Purkinje cells in the brain (at protein level).

It localises to the nucleus. Its function is as follows. Transcription factor that binds to the consensus sequence 5'-TCCTCCC-3' and acts as a transcriptional repressor. Binds to the promoter region of SIX3 and recruits other proteins involved in chromatin modification and transcriptional corepression, resulting in methylation of the promoter and transcriptional repression. Acts as a transcriptional repressor of HS3ST1 and HS3ST3A1 via binding to gene promoter regions. This chain is Zinc finger protein 263, found in Mus musculus (Mouse).